A 385-amino-acid polypeptide reads, in one-letter code: Lipid-A-disaccharide synthase (385 aa).

The protein belongs to the LpxB family.

The enzyme catalyses a lipid X + a UDP-2-N,3-O-bis[(3R)-3-hydroxyacyl]-alpha-D-glucosamine = a lipid A disaccharide + UDP + H(+). Its pathway is bacterial outer membrane biogenesis; LPS lipid A biosynthesis. Condensation of UDP-2,3-diacylglucosamine and 2,3-diacylglucosamine-1-phosphate to form lipid A disaccharide, a precursor of lipid A, a phosphorylated glycolipid that anchors the lipopolysaccharide to the outer membrane of the cell. This Rickettsia canadensis (strain McKiel) protein is Lipid-A-disaccharide synthase.